Consider the following 296-residue polypeptide: MNMKKLATLVSAVALSATVSANAMAKDTIALVISTLNNPFFVSLKDGAQKEADKLGYNLVVLDSQNNPAKELANVQDLTVRGTKILLINPTDSDAVGNAVKMANQAKIPVITLDRQATKGDVVSHIASDNVLGGKIAGDYIAKKAGEGAKVIELQGIAGTSAARERGEGFQQAVAAHKFNVLASQPADFDRTKGLNVMQNLLTAHPDVQAVFAQNDEMALGALRALQTAGKADVMVVGFDGTPDGEKAVKDGKLAATIAQLPDQIGAKGVEVADKVLKGEKVQAKYPVDLKLVIKQ.

The first 25 residues, 1 to 25, serve as a signal peptide directing secretion; the sequence is MNMKKLATLVSAVALSATVSANAMA.

It belongs to the bacterial solute-binding protein 2 family. In terms of assembly, the complex is composed of an ATP-binding protein (RbsA), two transmembrane proteins (RbsC) and a solute-binding protein (RbsB).

It is found in the periplasm. In terms of biological role, part of the ABC transporter complex RbsABC involved in ribose import. Binds ribose. The polypeptide is Ribose import binding protein RbsB (rbsB) (Salmonella typhi).